Here is a 294-residue protein sequence, read N- to C-terminus: uncharacterized protein (294 aa).

The interval 181–204 (DEPFPTTKNHNNDKRETNDKDDQQ) is disordered. Residues 190–204 (HNNDKRETNDKDDQQ) are compositionally biased toward basic and acidic residues.

It belongs to the IIV-6 391R family.

This is an uncharacterized protein from Acheta domesticus (House cricket).